A 250-amino-acid chain; its full sequence is Peptidyl-tRNA hydrolase (250 aa).

A tRNA-binding site is contributed by Y14. H19 functions as the Proton acceptor in the catalytic mechanism. 3 residues coordinate tRNA: F64, N66, and N112. Residues 192-250 form a disordered region; that stretch reads MGDGNQRPGGVKTDPAQLEKAPPKAQSHIRQARQNQKKPNIPESGPMAEMLKKLLGKKD. Residues 219-229 are compositionally biased toward polar residues; the sequence is HIRQARQNQKK. Over residues 241–250 the composition is skewed to basic and acidic residues; it reads MLKKLLGKKD.

Belongs to the PTH family. In terms of assembly, monomer.

The protein localises to the cytoplasm. The enzyme catalyses an N-acyl-L-alpha-aminoacyl-tRNA + H2O = an N-acyl-L-amino acid + a tRNA + H(+). Hydrolyzes ribosome-free peptidyl-tRNAs (with 1 or more amino acids incorporated), which drop off the ribosome during protein synthesis, or as a result of ribosome stalling. Its function is as follows. Catalyzes the release of premature peptidyl moieties from peptidyl-tRNA molecules trapped in stalled 50S ribosomal subunits, and thus maintains levels of free tRNAs and 50S ribosomes. The protein is Peptidyl-tRNA hydrolase of Brucella suis (strain ATCC 23445 / NCTC 10510).